Here is a 666-residue protein sequence, read N- to C-terminus: Putative cysteine-rich receptor-like protein kinase 20 (666 aa).

The signal sequence occupies residues 1–23; it reads MSSLICFIFLFLFSFITSFTASA. Residues 24–264 are Extracellular-facing; it reads QNPFYLYHNC…PRPGKGGNSS (241 aa). 2 consecutive Gnk2-homologous domains span residues 27–131 and 137–241; these read FYLY…NRNI and TDGG…NYEF. N-linked (GlcNAc...) asparagine glycans are attached at residues Asn32, Asn42, Asn60, Asn69, and Asn103. Residue Asn262 is glycosylated (N-linked (GlcNAc...) asparagine). Residues 265–285 traverse the membrane as a helical segment; it reads VIVIAVVVPITVLFLLFVAFF. The Cytoplasmic segment spans residues 286 to 666; it reads SVRRAKRKKT…EASITSVAPR (381 aa). A Protein kinase domain is found at 344–623; that stretch reads FLPINKLGQG…QMLTTSSIAL (280 aa). Residues 350–358 and Lys372 contribute to the ATP site; that span reads LGQGGFGEV. Residue Tyr417 is modified to Phosphotyrosine. The active-site Proton acceptor is Asp469. A Phosphothreonine modification is found at Thr509. Tyr517 bears the Phosphotyrosine mark.

Belongs to the protein kinase superfamily. Ser/Thr protein kinase family. CRK subfamily.

The protein localises to the membrane. It catalyses the reaction L-seryl-[protein] + ATP = O-phospho-L-seryl-[protein] + ADP + H(+). The catalysed reaction is L-threonyl-[protein] + ATP = O-phospho-L-threonyl-[protein] + ADP + H(+). This Arabidopsis thaliana (Mouse-ear cress) protein is Putative cysteine-rich receptor-like protein kinase 20 (CRK20).